The chain runs to 412 residues: Protein trichome birefringence-like 13 (412 aa).

Residues 9-29 (PSLFPLLSLLCFISIFLLLSL) form a helical; Signal-anchor for type II membrane protein membrane-spanning segment. Residues 137–139 (GDS) carry the GDS motif motif. The short motif at 385 to 399 (DCMHWCLPGLTDTWN) is the DCXHWCLPGXXDXWN motif element.

Belongs to the PC-esterase family. TBL subfamily.

The protein resides in the membrane. May act as a bridging protein that binds pectin and other cell wall polysaccharides. Probably involved in maintaining esterification of pectins. May be involved in the specific O-acetylation of cell wall polymers. This Arabidopsis thaliana (Mouse-ear cress) protein is Protein trichome birefringence-like 13 (TBL13).